Reading from the N-terminus, the 79-residue chain is Sulfur carrier protein TusA (79 aa).

Cysteine 17 acts as the Cysteine persulfide intermediate in catalysis.

It belongs to the sulfur carrier protein TusA family.

Its subcellular location is the cytoplasm. Functionally, sulfur carrier protein which probably makes part of a sulfur-relay system. The chain is Sulfur carrier protein TusA from Actinobacillus pleuropneumoniae serotype 7 (strain AP76).